Here is a 475-residue protein sequence, read N- to C-terminus: Aspartyl/glutamyl-tRNA(Asn/Gln) amidotransferase subunit B (475 aa).

This sequence belongs to the GatB/GatE family. GatB subfamily. Heterotrimer of A, B and C subunits.

The enzyme catalyses L-glutamyl-tRNA(Gln) + L-glutamine + ATP + H2O = L-glutaminyl-tRNA(Gln) + L-glutamate + ADP + phosphate + H(+). The catalysed reaction is L-aspartyl-tRNA(Asn) + L-glutamine + ATP + H2O = L-asparaginyl-tRNA(Asn) + L-glutamate + ADP + phosphate + 2 H(+). Its function is as follows. Allows the formation of correctly charged Asn-tRNA(Asn) or Gln-tRNA(Gln) through the transamidation of misacylated Asp-tRNA(Asn) or Glu-tRNA(Gln) in organisms which lack either or both of asparaginyl-tRNA or glutaminyl-tRNA synthetases. The reaction takes place in the presence of glutamine and ATP through an activated phospho-Asp-tRNA(Asn) or phospho-Glu-tRNA(Gln). This chain is Aspartyl/glutamyl-tRNA(Asn/Gln) amidotransferase subunit B, found in Pediococcus pentosaceus (strain ATCC 25745 / CCUG 21536 / LMG 10740 / 183-1w).